A 372-amino-acid polypeptide reads, in one-letter code: MKKKALITGVTGQDGSYLAEFLLAKGYEVHGIKRRASSFNTQRVDHIYQDPHVDNASFILHYGDLTDSSNLTRILQEVKPDEVYNLGAQSHVAVSFESPEYTADVDAMGTLRLLEAIRLLGLEKTTKFYQASTSELYGLVQETPQKETTPFYPRSPYAVAKMYAYWIVVNYRESYGMYACNGILFNHESPRRGETFVTRKITRGLANIAQGLEKCLYMGNMDALRDWGHAKDYVRMQWMMLQQDQPEDFVIATGVQYSVRQFIEWSAKELGVTLTFEGQGVDEKGIVTAIEGDKAPALKVGDVVVQIDPRYFRPAEVETLLGDPSKAKQKLGWTPEITVQEMCAEMVMEDLKVAQRHALLKLHGHDVPVSVE.

NADP(+) is bound by residues Gly-9–Asp-14, Asp-64–Leu-65, Leu-86–Ser-90, and Tyr-101. The active site involves Thr-133. Residues Glu-135 and Tyr-157 each act as nucleophile in the active site. Residues Lys-161, His-187, and Arg-192 each contribute to the NADP(+) site.

It belongs to the NAD(P)-dependent epimerase/dehydratase family. GDP-mannose 4,6-dehydratase subfamily. Requires NADP(+) as cofactor.

The enzyme catalyses GDP-alpha-D-mannose = GDP-4-dehydro-alpha-D-rhamnose + H2O. The protein operates within nucleotide-sugar biosynthesis; GDP-L-fucose biosynthesis via de novo pathway; GDP-L-fucose from GDP-alpha-D-mannose: step 1/2. Catalyzes the conversion of GDP-D-mannose to GDP-4-dehydro-6-deoxy-D-mannose. In Vibrio cholerae, this protein is GDP-mannose 4,6-dehydratase.